An 828-amino-acid polypeptide reads, in one-letter code: MQDRNLIDVNLTSEMKTSFIDYAMSVIVARALPDVRDGLKPVHRRILYGMNELGVTPDKPHKKSARITGDVMGKYHPHGDSSIYEAMVRMAQWWSYRHMLVDGHGNFGSMDGDGAAAQRYTEARMSKIALELLRDINKNTVNFQDNYDGSEREPVVLPARFPNLLVNGATGIAVGMATNIPPHNLAESIDAVKMVMEHPDCTTRELMEVIPGPDFPTGALVMGRSGIHRAYDTGKGSIVLRSRTEIETTQTGRERIVVTEFPYGVNKTKVHEHIVRLAQEKRLEGITAVRDESSREGVRFVIEIRREASATVILNNLFKLTSLQTNFSFNMLAIENGVPKILSLRQIIDNYISHQKEVIIRRTRFDKDKAEARAHILEGLLIALDHLDEVIAIIRNSETDVIAQTELMSRFDLSERQSQAILDMRLRRLTGLERDKIQSEYDDLLALIADLSDILAKPERIITIIKEEMDEIKRKYANPRRTELMVGEVLSLEDEDLIEEEDVLITLSNKGYIKRLAQDEFRAQKRGGRGVQGTGVNNDDFVRELVSTSTHDTLLFFTNFGRVYRLKAYEIPEYGRTAKGLPIVNLLKLEDGETIQTIINARKEETAGKSFFFTTKQGIVKRTEVSEFNNIRQNGLRALKLKEGDQLINVLLTSGQDDIIIGTHSGYSVRFNEASIRNMGRSATGVRGVKLREDDRVVGASRIRDNQEVLVITENGFGKRTSATDYPTKGRGGKGIKTANITPKNGQLAGLVTVDGTEDIMVITNKGVIIRTNVANISQTGRATLGVKIMKLDADAKIVTFTLVQPEDSSIAEINTDRENSISKNKDN.

Positions 32-497 (LPDVRDGLKP…EVLSLEDEDL (466 aa)) constitute a Topo IIA-type catalytic domain. Catalysis depends on Tyr-120, which acts as the O-(5'-phospho-DNA)-tyrosine intermediate. A GyrA-box motif is present at residues 524–530 (QKRGGRG).

This sequence belongs to the type II topoisomerase GyrA/ParC subunit family. In terms of assembly, heterotetramer, composed of two GyrA and two GyrB chains. In the heterotetramer, GyrA contains the active site tyrosine that forms a transient covalent intermediate with DNA, while GyrB binds cofactors and catalyzes ATP hydrolysis.

The protein localises to the cytoplasm. The catalysed reaction is ATP-dependent breakage, passage and rejoining of double-stranded DNA.. Its function is as follows. A type II topoisomerase that negatively supercoils closed circular double-stranded (ds) DNA in an ATP-dependent manner to modulate DNA topology and maintain chromosomes in an underwound state. Negative supercoiling favors strand separation, and DNA replication, transcription, recombination and repair, all of which involve strand separation. Also able to catalyze the interconversion of other topological isomers of dsDNA rings, including catenanes and knotted rings. Type II topoisomerases break and join 2 DNA strands simultaneously in an ATP-dependent manner. This chain is DNA gyrase subunit A, found in Streptococcus pyogenes serotype M6 (strain ATCC BAA-946 / MGAS10394).